Reading from the N-terminus, the 432-residue chain is 3-phosphoshikimate 1-carboxyvinyltransferase (432 aa).

3-phosphoshikimate is bound by residues lysine 21, serine 22, and arginine 26. Position 21 (lysine 21) interacts with phosphoenolpyruvate. Residues glycine 93 and arginine 121 each coordinate phosphoenolpyruvate. Residues serine 166, glutamine 168, aspartate 318, and lysine 345 each contribute to the 3-phosphoshikimate site. Glutamine 168 is a phosphoenolpyruvate binding site. The Proton acceptor role is filled by aspartate 318. Phosphoenolpyruvate-binding residues include arginine 349 and arginine 391.

The protein belongs to the EPSP synthase family. As to quaternary structure, monomer.

It localises to the cytoplasm. The catalysed reaction is 3-phosphoshikimate + phosphoenolpyruvate = 5-O-(1-carboxyvinyl)-3-phosphoshikimate + phosphate. Its pathway is metabolic intermediate biosynthesis; chorismate biosynthesis; chorismate from D-erythrose 4-phosphate and phosphoenolpyruvate: step 6/7. Functionally, catalyzes the transfer of the enolpyruvyl moiety of phosphoenolpyruvate (PEP) to the 5-hydroxyl of shikimate-3-phosphate (S3P) to produce enolpyruvyl shikimate-3-phosphate and inorganic phosphate. This is 3-phosphoshikimate 1-carboxyvinyltransferase from Persephonella marina (strain DSM 14350 / EX-H1).